The primary structure comprises 1366 residues: ABC multidrug transporter MDR2 (1366 aa).

The chain crosses the membrane as a helical span at residues 52 to 72 (IALIVIGTIAGIGAGIPFPLL). In terms of domain architecture, ABC transmembrane type-1 1 spans 56–354 (VIGTIAGIGA…MAPFMHIFAS (299 aa)). A glycan (N-linked (GlcNAc...) asparagine) is linked at Asn84. 5 consecutive transmembrane segments (helical) span residues 106-126 (VLQVIYASILNFVCMYIHTGC), 180-200 (KVGLFIGTISYFVAAYIVAFL), 202-222 (VATIAAMLMSVVPIYFLMAFG), 288-308 (IQFGMLYFVAYASNALAFWQG), and 323-343 (VSVGAVYTVIFVLLDASFVLS). The ABC transporter 1 domain occupies 390 to 669 (IELQDVTFNY…DGVYAGMVRL (280 aa)). Residue 425–432 (GTSGSGKS) coordinates ATP. N-linked (GlcNAc...) asparagine glycosylation is present at Asn620. Residues 727–746 (PEEADSLPTEPEAKKEKPKQ) form a disordered region. The next 4 membrane-spanning stretches (helical) occupy residues 768 to 788 (LGLITSIMIGVSYTGEAVIFG), 807 to 827 (GMLFGLLFFILAVAKFAAVIV), 868 to 888 (LLVALVTSDASALSSLTGTTI), and 898 to 918 (LFAGVILSHVIAWKIAVVLLA). In terms of domain architecture, ABC transmembrane type-1 2 spans 768–1055 (LGLITSIMIG…MFALVPDISK (288 aa)). Asn976 is a glycosylation site (N-linked (GlcNAc...) asparagine). 2 consecutive transmembrane segments (helical) span residues 995–1015 (FWLSLAYSISTLVYALAYWWG) and 1019–1039 (ILAGMYTQVQFFIVLPALLFS). One can recognise an ABC transporter 2 domain in the interval 1122-1361 (VQFRNVHFRY…CESYRANVIH (240 aa)). 1157–1164 (GPSGSGKS) is a binding site for ATP.

It belongs to the ABC transporter superfamily. ABCB family. Multidrug resistance exporter (TC 3.A.1.201) subfamily.

It localises to the cell membrane. Pleiotropic ABC efflux transporter that may be involved in the modulation susceptibility to a wide range of unrelated cytotoxic compounds. Does not act as an efflux pump for azoles, including fluconazole, itraconazole, ketoconazole, miconazole and voriconazole, nor does it modulate susceptibility to cycloheximide. The sequence is that of ABC multidrug transporter MDR2 from Trichophyton rubrum (strain ATCC MYA-4607 / CBS 118892) (Athlete's foot fungus).